The following is a 275-amino-acid chain: MAKGPVSTSSDDELPFETQEPIAADERSFFGGQPQKPSAPNARAALPASLAGQEHYHGHRERLRDRFREQGDAALADYEILELLLFRLIPRRDTKPIAKALIERFGSLAGVFGAPQALLMEVKGVGEAVALDLKLISTVAHRTLKSELRTKQVLSSWSSVIQYCHAAMAHETREQFRILFLDKRNVLIADEVQGRGTVDHTPVYPREVVKRALELSATAMVLVHNHPSGDPTPSRADIDMTKVIIDAAKALDITVHDHIIIGKDGHVSLKGLKLI.

The segment at 1-45 is disordered; that stretch reads MAKGPVSTSSDDELPFETQEPIAADERSFFGGQPQKPSAPNARAA. The region spanning 153–275 is the MPN domain; sequence VLSSWSSVIQ…HVSLKGLKLI (123 aa). 3 residues coordinate Zn(2+): H224, H226, and D237. A JAMM motif motif is present at residues 224-237; sequence HNHPSGDPTPSRAD.

The protein belongs to the UPF0758 family.

The polypeptide is UPF0758 protein RL2068 (Rhizobium johnstonii (strain DSM 114642 / LMG 32736 / 3841) (Rhizobium leguminosarum bv. viciae)).